The primary structure comprises 204 residues: FMN-dependent NADH:quinone oxidoreductase (204 aa).

FMN is bound by residues serine 10, 16–18, and 96–99; these read SIS and MYNF.

It belongs to the azoreductase type 1 family. Homodimer. FMN serves as cofactor.

It carries out the reaction 2 a quinone + NADH + H(+) = 2 a 1,4-benzosemiquinone + NAD(+). The enzyme catalyses N,N-dimethyl-1,4-phenylenediamine + anthranilate + 2 NAD(+) = 2-(4-dimethylaminophenyl)diazenylbenzoate + 2 NADH + 2 H(+). In terms of biological role, quinone reductase that provides resistance to thiol-specific stress caused by electrophilic quinones. Also exhibits azoreductase activity. Catalyzes the reductive cleavage of the azo bond in aromatic azo compounds to the corresponding amines. The polypeptide is FMN-dependent NADH:quinone oxidoreductase (Herminiimonas arsenicoxydans).